We begin with the raw amino-acid sequence, 145 residues long: Peptide methionine sulfoxide reductase MsrB (145 aa).

The MsrB domain occupies 4–127; sequence SEELKQRIGD…NSAALKFIPY (124 aa). C116 (nucleophile) is an active-site residue.

The protein belongs to the MsrB Met sulfoxide reductase family.

The catalysed reaction is L-methionyl-[protein] + [thioredoxin]-disulfide + H2O = L-methionyl-(R)-S-oxide-[protein] + [thioredoxin]-dithiol. This Streptococcus pyogenes serotype M6 (strain ATCC BAA-946 / MGAS10394) protein is Peptide methionine sulfoxide reductase MsrB.